The sequence spans 85 residues: uncharacterized protein (85 aa).

This sequence belongs to the ycf76 family.

Its subcellular location is the plastid. It localises to the chloroplast. This is an uncharacterized protein from Oryza sativa subsp. japonica (Rice).